The chain runs to 509 residues: Maturase K (509 aa).

The protein belongs to the intron maturase 2 family. MatK subfamily.

Its subcellular location is the plastid. Its function is as follows. Usually encoded in the trnK tRNA gene intron. Probably assists in splicing its own and other chloroplast group II introns. This chain is Maturase K, found in Castilleja linariifolia (Wyoming Indian paintbrush).